A 573-amino-acid chain; its full sequence is Proline--tRNA ligase (573 aa).

It belongs to the class-II aminoacyl-tRNA synthetase family. ProS type 1 subfamily. Homodimer.

It localises to the cytoplasm. It carries out the reaction tRNA(Pro) + L-proline + ATP = L-prolyl-tRNA(Pro) + AMP + diphosphate. In terms of biological role, catalyzes the attachment of proline to tRNA(Pro) in a two-step reaction: proline is first activated by ATP to form Pro-AMP and then transferred to the acceptor end of tRNA(Pro). As ProRS can inadvertently accommodate and process non-cognate amino acids such as alanine and cysteine, to avoid such errors it has two additional distinct editing activities against alanine. One activity is designated as 'pretransfer' editing and involves the tRNA(Pro)-independent hydrolysis of activated Ala-AMP. The other activity is designated 'posttransfer' editing and involves deacylation of mischarged Ala-tRNA(Pro). The misacylated Cys-tRNA(Pro) is not edited by ProRS. The chain is Proline--tRNA ligase from Caldanaerobacter subterraneus subsp. tengcongensis (strain DSM 15242 / JCM 11007 / NBRC 100824 / MB4) (Thermoanaerobacter tengcongensis).